A 231-amino-acid chain; its full sequence is Female protein (231 aa).

The signal sequence occupies residues 1-19; sequence MDKMLLLLGVSILLSEVFA. The Pentraxin (PTX) domain maps to 24-223; it reads TGKVFVFPRE…YAVIRPRCVA (200 aa). An N-linked (GlcNAc...) asparagine glycan is attached at asparagine 51. A disulfide bridge links cysteine 55 with cysteine 114. Positions 77, 78, 155, 156, 157, and 167 each coordinate Ca(2+).

Belongs to the pentraxin family. In terms of assembly, homopentamer. Pentraxin (or pentaxin) have a discoid arrangement of 5 non-covalently bound subunits. It depends on Ca(2+) as a cofactor.

It is found in the secreted. This Nothocricetulus migratorius (Gray dwarf hamster) protein is Female protein.